The primary structure comprises 72 residues: Translation initiation factor IF-1 (72 aa).

The S1-like domain occupies 1-72; that stretch reads MAKDDVIEIE…TKGRITYRFK (72 aa).

Belongs to the IF-1 family. As to quaternary structure, component of the 30S ribosomal translation pre-initiation complex which assembles on the 30S ribosome in the order IF-2 and IF-3, IF-1 and N-formylmethionyl-tRNA(fMet); mRNA recruitment can occur at any time during PIC assembly.

The protein localises to the cytoplasm. In terms of biological role, one of the essential components for the initiation of protein synthesis. Stabilizes the binding of IF-2 and IF-3 on the 30S subunit to which N-formylmethionyl-tRNA(fMet) subsequently binds. Helps modulate mRNA selection, yielding the 30S pre-initiation complex (PIC). Upon addition of the 50S ribosomal subunit IF-1, IF-2 and IF-3 are released leaving the mature 70S translation initiation complex. The chain is Translation initiation factor IF-1 from Ligilactobacillus salivarius (strain UCC118) (Lactobacillus salivarius).